The chain runs to 653 residues: Chaperone protein DnaK (653 aa).

The residue at position 200 (T200) is a Phosphothreonine; by autocatalysis. The segment at 615–653 (AEAAAAGAAGAGGAGASAGGASQQQDDVVDAEFKEVKKD) is disordered. Gly residues predominate over residues 623–632 (AGAGGAGASA).

This sequence belongs to the heat shock protein 70 family.

Its function is as follows. Acts as a chaperone. The polypeptide is Chaperone protein DnaK (Paraburkholderia xenovorans (strain LB400)).